We begin with the raw amino-acid sequence, 233 residues long: Phosducin-like protein C2A9.09 (233 aa).

A Phosducin domain is found at 58–212 (EDEEDDEFLQ…DIAALKDPQN (155 aa)). The tract at residues 86–233 (FGSVYPISKP…VNDDLDDDFD (148 aa)) is thioredoxin fold. The segment at 207 to 233 (LKDPQNAEDELGKRDSSVNDDLDDDFD) is disordered. A phosphoserine mark is found at serine 222 and serine 223. Over residues 224–233 (VNDDLDDDFD) the composition is skewed to acidic residues.

The protein belongs to the phosducin family.

This chain is Phosducin-like protein C2A9.09, found in Schizosaccharomyces pombe (strain 972 / ATCC 24843) (Fission yeast).